Here is a 249-residue protein sequence, read N- to C-terminus: Bacillaene synthase decarboxylase PksI (249 aa).

The active site involves H230.

The protein belongs to the enoyl-CoA hydratase/isomerase family. As to quaternary structure, homotrimer. Does not form a heterotrimeric complex with PksH.

Its subcellular location is the cytoplasm. The protein operates within antibiotic biosynthesis; bacillaene biosynthesis. Its function is as follows. Involved in some intermediate steps for the synthesis of the antibiotic polyketide bacillaene which is involved in secondary metabolism. Catalyzes the decarboxylation of the 3-methylglutaconyl group tethered to PksL to a 3-methylcrotonyl moiety. This chain is Bacillaene synthase decarboxylase PksI (pksI), found in Bacillus subtilis (strain 168).